A 198-amino-acid chain; its full sequence is Recombination protein RecR (198 aa).

The segment at 57-72 (CSICGHITDQDPCYIC) adopts a C4-type zinc-finger fold. The region spanning 80–175 (SVICVVQDPK…KLSRIAHGLP (96 aa)) is the Toprim domain.

The protein belongs to the RecR family.

Functionally, may play a role in DNA repair. It seems to be involved in an RecBC-independent recombinational process of DNA repair. It may act with RecF and RecO. This chain is Recombination protein RecR, found in Bacillus velezensis (strain DSM 23117 / BGSC 10A6 / LMG 26770 / FZB42) (Bacillus amyloliquefaciens subsp. plantarum).